The chain runs to 401 residues: Large ribosomal subunit protein uL4B (401 aa).

Residues 351–373 (IKAKEKKPDDGKPKAKKPLDAKT) show a composition bias toward basic and acidic residues. The tract at residues 351–401 (IKAKEKKPDDGKPKAKKPLDAKTKMIKLAKAKKRQARAEAKTAEAKTAESK) is disordered. Basic residues predominate over residues 374 to 385 (KMIKLAKAKKRQ). The segment covering 386–401 (ARAEAKTAEAKTAESK) has biased composition (basic and acidic residues).

It belongs to the universal ribosomal protein uL4 family. Component of the large ribosomal subunit.

The protein resides in the cytoplasm. In terms of biological role, component of the large ribosomal subunit. The ribosome is a large ribonucleoprotein complex responsible for the synthesis of proteins in the cell. In Xenopus laevis (African clawed frog), this protein is Large ribosomal subunit protein uL4B (rpl4-b).